The following is a 179-amino-acid chain: ADP-ribosylation factor (179 aa).

Residue G2 is the site of N-myristoyl glycine attachment. Residues 24–31 (GLDAAGKT), 67–71 (DVGGQ), and 126–129 (NKQD) each bind GTP.

It belongs to the small GTPase superfamily. Arf family.

It localises to the golgi apparatus. Functionally, GTP-binding protein involved in protein trafficking; may modulate vesicle budding and uncoating within the Golgi apparatus. The protein is ADP-ribosylation factor (ARF1) of Candida albicans (strain SC5314 / ATCC MYA-2876) (Yeast).